The chain runs to 51 residues: U-Asilidin(1)-Mar1a (51 aa).

A signal peptide spans 1 to 23 (MANYIEVFSVLAIIFATVLAALA). 3 disulfide bridges follow: C26–C40, C33–C44, and C39–C49.

It belongs to the asilidin-1 family. In terms of tissue distribution, expressed by the venom gland. Is the most highly expressed peptide and is around 3000 times higher expressed in the thoracic glands compared to its body tissues.

It is found in the secreted. Induces neurotoxic effect on honeybees, including slow movements, disorientation and paralysis. Since it provokes similar symptoms than omega-atracotoxin, it is probable that it acts in the same way by inhibiting voltage-gated calcium channels. The polypeptide is U-Asilidin(1)-Mar1a (Machimus arthriticus (Breck robberfly)).